Reading from the N-terminus, the 218-residue chain is LexA repressor (218 aa).

The H-T-H motif DNA-binding region spans 28–48 (RAEIAAEFGFSSPNSAEEHLR). Residues S136 and K173 each act as for autocatalytic cleavage activity in the active site.

This sequence belongs to the peptidase S24 family. Homodimer.

The catalysed reaction is Hydrolysis of Ala-|-Gly bond in repressor LexA.. In terms of biological role, represses a number of genes involved in the response to DNA damage (SOS response), including recA and lexA. In the presence of single-stranded DNA, RecA interacts with LexA causing an autocatalytic cleavage which disrupts the DNA-binding part of LexA, leading to derepression of the SOS regulon and eventually DNA repair. The chain is LexA repressor from Cupriavidus metallidurans (strain ATCC 43123 / DSM 2839 / NBRC 102507 / CH34) (Ralstonia metallidurans).